The primary structure comprises 208 residues: Urease accessory protein UreG (208 aa).

GTP is bound at residue 10–17; the sequence is GPVGSGKT.

Belongs to the SIMIBI class G3E GTPase family. UreG subfamily. Homodimer. UreD, UreF and UreG form a complex that acts as a GTP-hydrolysis-dependent molecular chaperone, activating the urease apoprotein by helping to assemble the nickel containing metallocenter of UreC. The UreE protein probably delivers the nickel.

Its subcellular location is the cytoplasm. Its function is as follows. Facilitates the functional incorporation of the urease nickel metallocenter. This process requires GTP hydrolysis, probably effectuated by UreG. This is Urease accessory protein UreG from Halalkalibacterium halodurans (strain ATCC BAA-125 / DSM 18197 / FERM 7344 / JCM 9153 / C-125) (Bacillus halodurans).